The chain runs to 279 residues: Pantothenate synthetase (279 aa).

31-38 (MGNLHGGH) provides a ligand contact to ATP. His38 functions as the Proton donor in the catalytic mechanism. (R)-pantoate is bound at residue Gln62. Gln62 contributes to the beta-alanine binding site. 150–153 (GRKD) is a binding site for ATP. Position 156 (Gln156) interacts with (R)-pantoate. Residues Val179 and 187–190 (KSSR) each bind ATP.

The protein belongs to the pantothenate synthetase family. Homodimer.

Its subcellular location is the cytoplasm. The catalysed reaction is (R)-pantoate + beta-alanine + ATP = (R)-pantothenate + AMP + diphosphate + H(+). It functions in the pathway cofactor biosynthesis; (R)-pantothenate biosynthesis; (R)-pantothenate from (R)-pantoate and beta-alanine: step 1/1. Catalyzes the condensation of pantoate with beta-alanine in an ATP-dependent reaction via a pantoyl-adenylate intermediate. This is Pantothenate synthetase from Stenotrophomonas maltophilia (strain R551-3).